Here is a 133-residue protein sequence, read N- to C-terminus: Small ribosomal subunit protein uS8 (133 aa).

A disordered region spans residues M1–A29. Basic and acidic residues predominate over residues N16–T25.

It belongs to the universal ribosomal protein uS8 family. Part of the 30S ribosomal subunit. Contacts proteins S5 and S12.

Functionally, one of the primary rRNA binding proteins, it binds directly to 16S rRNA central domain where it helps coordinate assembly of the platform of the 30S subunit. The chain is Small ribosomal subunit protein uS8 from Prochlorococcus marinus (strain MIT 9211).